The sequence spans 484 residues: Protein nucleotidyltransferase YdiU (484 aa).

Gly81, Gly83, Arg84, Lys103, Asp115, Gly116, Arg166, and Arg173 together coordinate ATP. Asp244 acts as the Proton acceptor in catalysis. Mg(2+)-binding residues include Asn245 and Asp254. Asp254 serves as a coordination point for ATP.

Belongs to the SELO family. It depends on Mg(2+) as a cofactor. Mn(2+) serves as cofactor.

It catalyses the reaction L-seryl-[protein] + ATP = 3-O-(5'-adenylyl)-L-seryl-[protein] + diphosphate. It carries out the reaction L-threonyl-[protein] + ATP = 3-O-(5'-adenylyl)-L-threonyl-[protein] + diphosphate. The catalysed reaction is L-tyrosyl-[protein] + ATP = O-(5'-adenylyl)-L-tyrosyl-[protein] + diphosphate. The enzyme catalyses L-histidyl-[protein] + UTP = N(tele)-(5'-uridylyl)-L-histidyl-[protein] + diphosphate. It catalyses the reaction L-seryl-[protein] + UTP = O-(5'-uridylyl)-L-seryl-[protein] + diphosphate. It carries out the reaction L-tyrosyl-[protein] + UTP = O-(5'-uridylyl)-L-tyrosyl-[protein] + diphosphate. Its function is as follows. Nucleotidyltransferase involved in the post-translational modification of proteins. It can catalyze the addition of adenosine monophosphate (AMP) or uridine monophosphate (UMP) to a protein, resulting in modifications known as AMPylation and UMPylation. The chain is Protein nucleotidyltransferase YdiU from Shewanella baltica (strain OS195).